Consider the following 434-residue polypeptide: Enolase (434 aa).

Gln-163 lines the (2R)-2-phosphoglycerate pocket. Glu-205 (proton donor) is an active-site residue. Mg(2+) is bound by residues Asp-242, Glu-289, and Asp-316. Positions 341, 370, 371, and 392 each coordinate (2R)-2-phosphoglycerate. Residue Lys-341 is the Proton acceptor of the active site.

It belongs to the enolase family. The cofactor is Mg(2+).

Its subcellular location is the cytoplasm. The protein resides in the secreted. It localises to the cell surface. The catalysed reaction is (2R)-2-phosphoglycerate = phosphoenolpyruvate + H2O. Its pathway is carbohydrate degradation; glycolysis; pyruvate from D-glyceraldehyde 3-phosphate: step 4/5. Its function is as follows. Catalyzes the reversible conversion of 2-phosphoglycerate (2-PG) into phosphoenolpyruvate (PEP). It is essential for the degradation of carbohydrates via glycolysis. This is Enolase from Lacticaseibacillus paracasei (strain ATCC 334 / BCRC 17002 / CCUG 31169 / CIP 107868 / KCTC 3260 / NRRL B-441) (Lactobacillus paracasei).